Reading from the N-terminus, the 80-residue chain is Conotoxin Cl10.1 (80 aa).

The signal sequence occupies residues 1 to 20 (MTTLGMTMLVLLLLLPLATC). The propeptide occupies 21–36 (LGDGERSPWDSLLRAL).

In terms of processing, contains 4 disulfide bonds. Expressed by the venom duct.

The protein resides in the secreted. This is Conotoxin Cl10.1 from Californiconus californicus (California cone).